Consider the following 330-residue polypeptide: Diacylglycerol acyltransferase/mycolyltransferase Ag85B (330 aa).

The first 40 residues, 1–40 (MTDLSEKVRAWGRRLVVGAAAAATLPGLIGIAGGAATANA), serve as a signal peptide directing secretion. 82–83 (LR) contributes to the substrate binding site. The fibronectin-binding stretch occupies residues 98–108 (FEWYYQSGLSV). An intrachain disulfide couples Cys-127 to Cys-132. 2 residues coordinate substrate: Ser-166 and Asp-194. Ser-166 acts as the Nucleophile in catalysis. Glu-270 is an active-site residue. Residues 272 to 275 (FVRS), Lys-279, and 302 to 304 (HSW) each bind substrate. His-302 is an active-site residue.

It belongs to the mycobacterial A85 antigen family.

The protein resides in the secreted. It carries out the reaction 2 alpha,alpha'-trehalose 6-mycolate = alpha,alpha'-trehalose 6,6'-bismycolate + alpha,alpha-trehalose. The catalysed reaction is an acyl-CoA + a 1,2-diacyl-sn-glycerol = a triacyl-sn-glycerol + CoA. Functionally, the antigen 85 proteins (FbpA, FbpB, FbpC) are responsible for the high affinity of mycobacteria for fibronectin, a large adhesive glycoprotein, which facilitates the attachment of M.tuberculosis to murine alveolar macrophages (AMs). They also help to maintain the integrity of the cell wall by catalyzing the transfer of mycolic acids to cell wall arabinogalactan and through the synthesis of alpha,alpha-trehalose dimycolate (TDM, cord factor). They catalyze the transfer of a mycoloyl residue from one molecule of alpha,alpha-trehalose monomycolate (TMM) to another TMM, leading to the formation of TDM. This chain is Diacylglycerol acyltransferase/mycolyltransferase Ag85B (fbpB), found in Mycobacterium intracellulare (strain ATCC 13950 / DSM 43223 / JCM 6384 / NCTC 13025 / 3600).